A 74-amino-acid chain; its full sequence is MEKGTVKWFNNAKGFGFICPEGGGEDIFAHYSTIQMDGYRTLKAGQSVQFDVHQGPKGNHASVIVPVEVEAAVA.

The CSD domain maps to 4-64 (GTVKWFNNAK…GPKGNHASVI (61 aa)).

In terms of assembly, homodimer.

The protein resides in the cytoplasm. In terms of biological role, inhibits DNA replication at both initiation and elongation steps, most probably by binding to the opened, single-stranded regions at replication forks. Plays a regulatory role in chromosomal replication in nutrient-depleted cells. The protein is Cold shock-like protein CspD (cspD) of Escherichia coli O157:H7.